An 87-amino-acid chain; its full sequence is Glutaredoxin (87 aa).

The Glutaredoxin domain maps to 1–87; sequence MFVVIFGRPG…YAKENLGLFD (87 aa). Cysteine 11 and cysteine 14 are oxidised to a cystine.

The protein belongs to the glutaredoxin family. In terms of assembly, monomer.

It localises to the cytoplasm. Its function is as follows. Has a glutathione-disulfide oxidoreductase activity in the presence of NADPH and glutathione reductase. Reduces low molecular weight disulfides and proteins. This Vibrio cholerae serotype O1 (strain ATCC 39315 / El Tor Inaba N16961) protein is Glutaredoxin (grx).